The primary structure comprises 279 residues: uncharacterized protein (279 aa).

3 helical membrane passes run 1 to 21 (MGFI…LCGI), 38 to 58 (FACH…SVVA), and 131 to 151 (SLRY…VFID).

It belongs to the 1-acyl-sn-glycerol-3-phosphate acyltransferase family.

The protein localises to the endoplasmic reticulum membrane. This is an uncharacterized protein from Schizosaccharomyces pombe (strain 972 / ATCC 24843) (Fission yeast).